The following is a 442-amino-acid chain: Histidine--tRNA ligase (442 aa).

It belongs to the class-II aminoacyl-tRNA synthetase family. In terms of assembly, homodimer.

The protein resides in the cytoplasm. It catalyses the reaction tRNA(His) + L-histidine + ATP = L-histidyl-tRNA(His) + AMP + diphosphate + H(+). This chain is Histidine--tRNA ligase (hisS), found in Treponema pallidum (strain Nichols).